Consider the following 649-residue polypeptide: Sulfate transporter 1.1 (649 aa).

A disordered region spans residues 1–20 (MSGTINPPDGGGSGARNPPV). At 1–86 (MSGTINPPDG…AREYTLRKFR (86 aa)) the chain is on the cytoplasmic side. Residues 87 to 107 (GDLIAGLTIASLCIPQDIGYA) form a helical membrane-spanning segment. The Extracellular segment spans residues 108–111 (KLAN). Residues 112 to 132 (VDPKYGLYSSFVPPLIYAGMG) form a helical membrane-spanning segment. Residues 133–136 (SSRD) lie on the Cytoplasmic side of the membrane. Residues 137 to 157 (IAIGPVAVVSLLVGTLCQAVI) traverse the membrane as a helical segment. Residues 158–168 (DPKKNPEDYLR) are Extracellular-facing. 2 helical membrane-spanning segments follow: residues 169-189 (LVFT…FLRL) and 190-210 (GFLI…GAAI). Topologically, residues 211–248 (TIALQQLKGFLGIKTFTKKTDIVSVMHSVFKNAEHGWN) are extracellular. The chain crosses the membrane as a helical span at residues 249 to 269 (WQTIVIGASFLTFLLVTKFIG). Residues 270-275 (KRNRKL) lie on the Cytoplasmic side of the membrane. The chain crosses the membrane as a helical span at residues 276 to 296 (FWVPAIAPLISVIISTFFVFI). Residues 297-334 (FRADKQGVQIVKHIDQGINPISVHKIFFSGKYFTEGIR) lie on the Extracellular side of the membrane. The helical transmembrane segment at 335–355 (IGGIAGMVALTEAVAIARTFA) threads the bilayer. The Cytoplasmic segment spans residues 356–367 (AMKDYQIDGNKE). A helical membrane pass occupies residues 368–388 (MIALGTMNVVGSMTSCYIATG). Residues 389-404 (SFSRSAVNFMAGVETA) lie on the Extracellular side of the membrane. Residues 405 to 425 (VSNIVMAIVVALTLEFITPLF) traverse the membrane as a helical segment. Residues 426–431 (KYTPNA) lie on the Cytoplasmic side of the membrane. A helical membrane pass occupies residues 432–452 (ILAAIIISAVLGLIDIDAAIL). The Extracellular segment spans residues 453 to 465 (IWRIDKLDFLACM). A helical transmembrane segment spans residues 466–486 (GAFLGVIFISVEIGLLIAVVI). Topologically, residues 487-649 (SFAKILLQVT…CSTEVAEQQT (163 aa)) are cytoplasmic. An STAS domain is found at 517–640 (QYPDAAQIPG…LTVGDAVAVC (124 aa)).

Belongs to the SLC26A/SulP transporter (TC 2.A.53) family. In terms of assembly, interacts with OASA1 through its STAS domain. As to expression, expressed in lateral root cap, root hairs, epidermal and cortical cells of roots.

It localises to the membrane. Functionally, high-affinity H(+)/sulfate cotransporter that mediates the uptake of the environmental sulfate by plant roots under low-sulfur conditions. Plays a central role in the regulation of sulfate assimilation. This chain is Sulfate transporter 1.1 (SULTR1;1), found in Arabidopsis thaliana (Mouse-ear cress).